The following is a 284-amino-acid chain: MLNKLILLLILSSCLVLSVKSEVNVDCSLVRCAQPICKPHYRLNMTDSCCGRCEPCTDVACTLQVKYCQDGEVPTGCCPCTLPPTKPDCSLVKCARPVCKPYYRLNMTDSCCGRCEPCTGVACTLQIKYCKDGEVPTGCCPCTPQPTKKPDCSKVPCPKILKYCQEGELPTGCCPCTPQPTKKPDCSRVPCPKILKYCKEGELPTGCCPCTPQPTKKPDCSDVMCTMDIRYCKNGELPTGCCPCTPQETKVPDCSKAMCTMDIKYCKPGEKPFGCCPCRENLTQ.

Residues 1–25 (MLNKLILLLILSSCLVLSVKSEVNV) form the signal peptide. The stretch at 25–64 (VDCSLVRCAQPICKPHYRLNMTDSCCGRCEPCTDVACTLQ) is one A-1 repeat. The stretch at 65 to 82 (VKYCQDGEVPTGCCPCTL) is one B-1 repeat. One copy of the A-2 repeat lies at 88–126 (DCSLVKCARPVCKPYYRLNMTDSCCGRCEPCTGVACTLQ). One copy of the B-2 repeat lies at 127-144 (IKYCKDGEVPTGCCPCTP). The C-1 repeat unit spans residues 145 to 159 (QPTKKPDCSKVPCPK). A B-3 repeat occupies 161 to 178 (LKYCQEGELPTGCCPCTP). The stretch at 179–193 (QPTKKPDCSRVPCPK) is one C-2 repeat. The B-4 repeat unit spans residues 195–212 (LKYCKEGELPTGCCPCTP). Residues 213 to 228 (QPTKKPDCSDVMCTMD) form a C-3 repeat. The stretch at 229–246 (IRYCKNGELPTGCCPCTP) is one B-5 repeat. One copy of the C-4 repeat lies at 247–262 (QETKVPDCSKAMCTMD). The stretch at 263 to 278 (IKYCKPGEKPFGCCPC) is one B-6 repeat.

The sequence is that of Prestalk D11 protein (ampA) from Dictyostelium discoideum (Social amoeba).